A 174-amino-acid chain; its full sequence is NAD(P)H-quinone oxidoreductase subunit J, chloroplastic (174 aa).

It belongs to the complex I 30 kDa subunit family. NDH is composed of at least 16 different subunits, 5 of which are encoded in the nucleus.

The protein resides in the plastid. It is found in the chloroplast thylakoid membrane. It carries out the reaction a plastoquinone + NADH + (n+1) H(+)(in) = a plastoquinol + NAD(+) + n H(+)(out). It catalyses the reaction a plastoquinone + NADPH + (n+1) H(+)(in) = a plastoquinol + NADP(+) + n H(+)(out). Functionally, NDH shuttles electrons from NAD(P)H:plastoquinone, via FMN and iron-sulfur (Fe-S) centers, to quinones in the photosynthetic chain and possibly in a chloroplast respiratory chain. The immediate electron acceptor for the enzyme in this species is believed to be plastoquinone. Couples the redox reaction to proton translocation, and thus conserves the redox energy in a proton gradient. The sequence is that of NAD(P)H-quinone oxidoreductase subunit J, chloroplastic from Mesostigma viride (Green alga).